Reading from the N-terminus, the 137-residue chain is Outer membrane protein assembly factor BamE (137 aa).

The signal sequence occupies residues 1 to 18 (MQVKTLLGATFLALSLAS). Cys19 carries N-palmitoyl cysteine lipidation. Residue Cys19 is the site of S-diacylglycerol cysteine attachment.

The protein belongs to the BamE family. In terms of assembly, part of the Bam complex.

It localises to the cell outer membrane. Functionally, part of the outer membrane protein assembly complex, which is involved in assembly and insertion of beta-barrel proteins into the outer membrane. The chain is Outer membrane protein assembly factor BamE from Haemophilus influenzae (strain ATCC 51907 / DSM 11121 / KW20 / Rd).